The sequence spans 99 residues: DNA-directed RNA polymerase subunit omega (99 aa).

It belongs to the RNA polymerase subunit omega family. As to quaternary structure, the RNAP catalytic core consists of 2 alpha, 1 beta, 1 beta' and 1 omega subunit. When a sigma factor is associated with the core the holoenzyme is formed, which can initiate transcription.

It catalyses the reaction RNA(n) + a ribonucleoside 5'-triphosphate = RNA(n+1) + diphosphate. Promotes RNA polymerase assembly. Latches the N- and C-terminal regions of the beta' subunit thereby facilitating its interaction with the beta and alpha subunits. The sequence is that of DNA-directed RNA polymerase subunit omega (rpoZ) from Deinococcus radiodurans (strain ATCC 13939 / DSM 20539 / JCM 16871 / CCUG 27074 / LMG 4051 / NBRC 15346 / NCIMB 9279 / VKM B-1422 / R1).